We begin with the raw amino-acid sequence, 662 residues long: Histidine decarboxylase (662 aa).

Positions 81 and 194 each coordinate substrate. Lys-305 is modified (N6-(pyridoxal phosphate)lysine).

This sequence belongs to the group II decarboxylase family. Homodimer. Pyridoxal 5'-phosphate is required as a cofactor.

The enzyme catalyses L-histidine + H(+) = histamine + CO2. Its pathway is amine and polyamine biosynthesis; histamine biosynthesis; histamine from L-histidine: step 1/1. In terms of biological role, catalyzes the biosynthesis of histamine from histidine. This Homo sapiens (Human) protein is Histidine decarboxylase (HDC).